A 188-amino-acid polypeptide reads, in one-letter code: Probable nicotinate-nucleotide adenylyltransferase (188 aa).

The protein belongs to the NadD family.

The enzyme catalyses nicotinate beta-D-ribonucleotide + ATP + H(+) = deamido-NAD(+) + diphosphate. Its pathway is cofactor biosynthesis; NAD(+) biosynthesis; deamido-NAD(+) from nicotinate D-ribonucleotide: step 1/1. Its function is as follows. Catalyzes the reversible adenylation of nicotinate mononucleotide (NaMN) to nicotinic acid adenine dinucleotide (NaAD). The protein is Probable nicotinate-nucleotide adenylyltransferase of Listeria monocytogenes serovar 1/2a (strain ATCC BAA-679 / EGD-e).